Consider the following 151-residue polypeptide: Large ribosomal subunit protein bL9 (151 aa).

It belongs to the bacterial ribosomal protein bL9 family.

Functionally, binds to the 23S rRNA. The protein is Large ribosomal subunit protein bL9 of Oenococcus oeni (strain ATCC BAA-331 / PSU-1).